The chain runs to 810 residues: Janus kinase and microtubule-interacting protein 2 (810 aa).

Coiled coils occupy residues Glu-13 to Arg-102, Glu-148 to Lys-178, and Arg-207 to Leu-244. Residues Pro-261–Glu-274 are compositionally biased toward basic and acidic residues. Disordered regions lie at residues Pro-261–Asp-280 and Tyr-437–Leu-465. Positions Asp-280–His-419 form a coiled coil. 2 coiled-coil regions span residues Ser-468–Arg-597 and Glu-664–Lys-808.

It belongs to the JAKMIP family. As to expression, highly expressed in brain, moderately expressed in thymus, spleen and lung, and weakly expressed in kidney, liver and peripheral blood lymphocytes. Also expressed in adrenal and pituitary glands, as well as testis.

Its subcellular location is the golgi apparatus. This Homo sapiens (Human) protein is Janus kinase and microtubule-interacting protein 2 (JAKMIP2).